The chain runs to 809 residues: Probable disease resistance protein At5g66900 (809 aa).

In terms of domain architecture, RPW8 spans 1 to 150 (MNDWASLGIG…LSKRMDLLSV (150 aa)). Residues 50-86 (PLTQKIDSMQKELDFGVKELKELRDTIERADVAVRKF) are a coiled coil. 2 consecutive NB-ARC domains span residues 153 to 280 (PVFR…DDVW) and 339 to 438 (SPDE…DMWV). 194–201 (APPGCGKT) contributes to the ATP binding site. The stretch at 494–515 (QSEFKENLERKRLNLEILENTF) forms a coiled coil. LRR repeat units follow at residues 650–672 (KLQE…ISEI), 674–696 (SLKT…IGNL), 698–720 (RLEV…TEGL), and 722–744 (NLRF…IGKL).

The protein belongs to the disease resistance NB-LRR family.

Functionally, probable disease resistance protein. The sequence is that of Probable disease resistance protein At5g66900 from Arabidopsis thaliana (Mouse-ear cress).